A 369-amino-acid polypeptide reads, in one-letter code: MKWKLFYFFTLLTFTPAYFFIEQNQWVILASFLVIVNLISLTVHWKFGLLLISCSAALLAYCQLMPEFQLAKLMKANWLRTPFISWLDQHTSGVFNQYLKLFLINETTKNTLYQSAIQLNIVHLFVISGFHLSFLFGVMERWLYKRFYINKITGFVMLLLYLFLVGFAFSALRVFVSKLLRQMFPKQLPENNLGLTALLIILMSPGALHNFGFNFSFLACFVLFAINKVKLWKPLQAVLTSTLILIVVSPITLHLNRKLNALSVFHNLLFTPIALFYFCASWLLLPLIPWMGNSLVGFYWPLPWLSQWALNTTVFLNLPKPNWVFYLVYYGLWGLLYTVGTVFYYDRSLWCRYWVNSPAVKPTAQPSRL.

The next 9 membrane-spanning stretches (helical) occupy residues 25–45 (QWVI…TVHW), 47–67 (FGLL…LMPE), 119–139 (LNIV…FGVM), 152–172 (ITGF…FSAL), 206–226 (GALH…LFAI), 235–255 (LQAV…TLHL), 268–288 (LLFT…LPLI), 295–315 (LVGF…TTVF), and 323–343 (WVFY…GTVF).

This sequence to B.subtilis ComEC.

Its subcellular location is the cell membrane. This is an uncharacterized protein from Mycoplasma pneumoniae (strain ATCC 29342 / M129 / Subtype 1) (Mycoplasmoides pneumoniae).